The chain runs to 210 residues: MPPELTPTRRSILQATLRLGAGATAGQVAQEVGITKQAISQQVNILRKLGYLQPAETRYGPLQVTDRARAALGEGLPIYGQIAAGIPALAEQSPEDFTPSIEALLGLKAGDFLLRVRGESMTGIGVMDGDYVVVRPAPEVHDGEVAVVLVPGDNAATLKRLYHFGQDILLTSENPAMPRLSFPAEQVQVQGRMVGRVGVGAPRVSHRVTE.

Positions 25-44 form a DNA-binding region, H-T-H motif; sequence AGQVAQEVGITKQAISQQVN. Catalysis depends on for autocatalytic cleavage activity residues Ser-120 and Lys-159.

Belongs to the peptidase S24 family. In terms of assembly, homodimer.

It carries out the reaction Hydrolysis of Ala-|-Gly bond in repressor LexA.. Functionally, represses a number of genes involved in the response to DNA damage (SOS response), including recA and lexA. In the presence of single-stranded DNA, RecA interacts with LexA causing an autocatalytic cleavage which disrupts the DNA-binding part of LexA, leading to derepression of the SOS regulon and eventually DNA repair. The sequence is that of LexA repressor from Deinococcus radiodurans (strain ATCC 13939 / DSM 20539 / JCM 16871 / CCUG 27074 / LMG 4051 / NBRC 15346 / NCIMB 9279 / VKM B-1422 / R1).